The following is a 465-amino-acid chain: MPKKVQPTGDENEEASVPCKRVKEELPETLSVLNFDSPSSFFESLISPIKVETFFKEFWEQKPLLIQRDDPVLAKYYQSLFSLSDLKRLCKKGVYYGRDVNVCRSISGKKKVLNKDGRAHFLQLRKDFDQKRATIQFHQPQRYKDELWRIQEKLECYFGSLVGSNVYMTPAGSQGLPPHYDDVEVFILQLEGTKHWRLYSPTVPLAHEYSVESEDRIGTPTHDFLLKPGDLLYFPRGTIHQAETPSGLAYSIHLTISTYQNNSWGDCLLDSISGFVFDIAKEDVALRSGMPRRMLLNVETPADVTRKLSGFLRTLADQLEGREELLSSDMKKDFVKHRLPPFFEGNGTETMDPGKQLPRLDNIIRLQFKDHIVLTVGPDKNPFDEAQQKVVYIYHSLKNVRQMHMIGEEEESEIFGLRFPLSHVDALKQIWCGSPIRVKDLKLDTDEEKENLALSLWSESLIQVL.

One can recognise a JmjC domain in the interval glutamine 139 to serine 271. Histidine 179, aspartate 181, and histidine 240 together coordinate Fe cation. At serine 309 the chain carries Phosphoserine.

This sequence belongs to the ROX family. MINA53 subfamily. Fe(2+) serves as cofactor. In terms of tissue distribution, predominantly expressed in testis. Expressed at high levels in spleen, thymus, and colon, but barely detectable in brain, skeletal muscle, and seminal vesicle (at protein level).

Its subcellular location is the nucleus. The protein resides in the nucleolus. It catalyses the reaction L-histidyl-[ribosomal protein uL15] + 2-oxoglutarate + O2 = (3S)-3-hydroxy-L-histidyl-[ribosomal protein uL15] + succinate + CO2. It carries out the reaction L-histidyl-[protein] + 2-oxoglutarate + O2 = (3S)-3-hydroxy-L-histidyl-[protein] + succinate + CO2. In terms of biological role, oxygenase that can act as both a histone lysine demethylase and a ribosomal histidine hydroxylase. Is involved in the demethylation of trimethylated 'Lys-9' on histone H3 (H3K9me3), leading to an increase in ribosomal RNA expression. Also catalyzes the hydroxylation of 60S ribosomal protein L27a on 'His-39'. May play an important role in cell growth and survival. May be involved in ribosome biogenesis, most likely during the assembly process of pre-ribosomal particles. The protein is Ribosomal oxygenase 2 of Mus musculus (Mouse).